The primary structure comprises 341 residues: Ketol-acid reductoisomerase (NADP(+)) (341 aa).

The KARI N-terminal Rossmann domain maps to 2–181; that stretch reads AKVYYNGDVN…GAARAGVLET (180 aa). Residues 25-28, Arg-48, Ser-52, and 82-85 each bind NADP(+); these read YGSQ and DEHQ. His-107 is a catalytic residue. NADP(+) is bound at residue Gly-133. One can recognise a KARI C-terminal knotted domain in the interval 182-327; sequence TFKEETETDL…RELREMMPFV (146 aa). Residues Asp-190, Glu-194, Glu-226, and Glu-230 each coordinate Mg(2+). Residue Ser-251 participates in substrate binding.

This sequence belongs to the ketol-acid reductoisomerase family. Mg(2+) is required as a cofactor.

It catalyses the reaction (2R)-2,3-dihydroxy-3-methylbutanoate + NADP(+) = (2S)-2-acetolactate + NADPH + H(+). The enzyme catalyses (2R,3R)-2,3-dihydroxy-3-methylpentanoate + NADP(+) = (S)-2-ethyl-2-hydroxy-3-oxobutanoate + NADPH + H(+). The protein operates within amino-acid biosynthesis; L-isoleucine biosynthesis; L-isoleucine from 2-oxobutanoate: step 2/4. It participates in amino-acid biosynthesis; L-valine biosynthesis; L-valine from pyruvate: step 2/4. In terms of biological role, involved in the biosynthesis of branched-chain amino acids (BCAA). Catalyzes an alkyl-migration followed by a ketol-acid reduction of (S)-2-acetolactate (S2AL) to yield (R)-2,3-dihydroxy-isovalerate. In the isomerase reaction, S2AL is rearranged via a Mg-dependent methyl migration to produce 3-hydroxy-3-methyl-2-ketobutyrate (HMKB). In the reductase reaction, this 2-ketoacid undergoes a metal-dependent reduction by NADPH to yield (R)-2,3-dihydroxy-isovalerate. The protein is Ketol-acid reductoisomerase (NADP(+)) of Shouchella clausii (strain KSM-K16) (Alkalihalobacillus clausii).